The primary structure comprises 102 residues: Small ribosomal subunit protein uS10 (102 aa).

It belongs to the universal ribosomal protein uS10 family. As to quaternary structure, part of the 30S ribosomal subunit.

In terms of biological role, involved in the binding of tRNA to the ribosomes. The sequence is that of Small ribosomal subunit protein uS10 from Methanosphaerula palustris (strain ATCC BAA-1556 / DSM 19958 / E1-9c).